The chain runs to 141 residues: Large ribosomal subunit protein uL11 (141 aa).

The protein belongs to the universal ribosomal protein uL11 family. In terms of assembly, part of the ribosomal stalk of the 50S ribosomal subunit. Interacts with L10 and the large rRNA to form the base of the stalk. L10 forms an elongated spine to which L12 dimers bind in a sequential fashion forming a multimeric L10(L12)X complex. Post-translationally, one or more lysine residues are methylated.

In terms of biological role, forms part of the ribosomal stalk which helps the ribosome interact with GTP-bound translation factors. This is Large ribosomal subunit protein uL11 from Synechococcus sp. (strain RCC307).